The primary structure comprises 31 residues: Branched-chain-amino-acid aminotransferase, mitochondrial (31 aa).

A mitochondrion-targeting transit peptide spans 1–27; it reads MAAAALRQIWARKFLPVPWLLCGPRRY.

The protein belongs to the class-IV pyridoxal-phosphate-dependent aminotransferase family. As to quaternary structure, homodimer. The cofactor is pyridoxal 5'-phosphate.

Its subcellular location is the mitochondrion. The enzyme catalyses L-leucine + 2-oxoglutarate = 4-methyl-2-oxopentanoate + L-glutamate. It catalyses the reaction L-isoleucine + 2-oxoglutarate = (S)-3-methyl-2-oxopentanoate + L-glutamate. It carries out the reaction L-valine + 2-oxoglutarate = 3-methyl-2-oxobutanoate + L-glutamate. Its function is as follows. Catalyzes the first reaction in the catabolism of the essential branched chain amino acids leucine, isoleucine, and valine. May also function as a transporter of branched chain alpha-keto acids. This Sus scrofa (Pig) protein is Branched-chain-amino-acid aminotransferase, mitochondrial (BCAT2).